The sequence spans 541 residues: Lysosomal cobalamin transport escort protein LMBD1 (541 aa).

Residues 1-11 (MATPVALLSES) are Extracellular-facing. A helical membrane pass occupies residues 12–31 (VLGWSIFTVVLLVILAFCWV). The Cytoplasmic segment spans residues 32–50 (YIRKYQSRQESEVISTITA). Residues 51–71 (ICALAIALITSALLPVDIFLV) form a helical membrane-spanning segment. Over 72–101 (SFMKHPNGTYKEWAANNETRVQIEDTVLYG) the chain is Extracellular. Residues N78 and N88 are each glycosylated (N-linked (GlcNAc...) asparagine). A helical membrane pass occupies residues 102–122 (YYTLYSIILFCVFLWIPFVYF). At 123 to 145 (YYEEKDEDNNNKCLQVKNALKYT) the chain is on the cytoplasmic side. The helical transmembrane segment at 146-166 (IGFVIVCSALLLIGTFVPLAS) threads the bilayer. Residues 167-189 (PPNQNSTQWQKVQYLFEELGSSH) are Extracellular-facing. Residue N171 is glycosylated (N-linked (GlcNAc...) asparagine). Residues 190-210 (GLAALSFSISSLTLIGMLAVI) form a helical membrane-spanning segment. At 211-306 (TYTAYGMSVL…KVGSALRPMK (96 aa)) the chain is on the cytoplasmic side. A helical transmembrane segment spans residues 307–327 (ILLGVFFILVALLFFVTLFIS). Residues 328–365 (NLDKALHSAGISTGFIIFGTNLTNPLNELLLALQPVFP) lie on the Extracellular side of the membrane. Residue N348 is glycosylated (N-linked (GlcNAc...) asparagine). A helical membrane pass occupies residues 366–386 (LDYVLITVITMYFVFTSMAGI). The Cytoplasmic portion of the chain corresponds to 387 to 409 (RNMGIWFFWIRLYKIRPQRTRPQ). Residues 410-430 (ALLFLCMILLLIVLHTSYMIY) traverse the membrane as a helical segment. Over 431 to 488 (SLAPQYVMYGSQKYLLQTPLPTAVPSQSNRSATITKICDADAPEDQCTVTRSYLFLHK) the chain is Extracellular. N459 is a glycosylation site (N-linked (GlcNAc...) asparagine). The chain crosses the membrane as a helical span at residues 489–509 (FWFFSTIYYFGNWAFLGVFLI). Over 510–541 (GLVVSCCKGKKSVIEGEVDADDSDFSDDEYVH) the chain is Cytoplasmic.

This sequence belongs to the LIMR family. LMBRD1 subfamily.

The protein resides in the endoplasmic reticulum membrane. The protein localises to the lysosome membrane. Its subcellular location is the cell membrane. Functionally, lysosomal membrane chaperone required to export cobalamin (vitamin B12) from the lysosome to the cytosol, allowing its conversion to cofactors. Targets ABCD4 transporter from the endoplasmic reticulum to the lysosome. Then forms a complex with lysosomal ABCD4 and cytoplasmic MMACHC to transport cobalamin across the lysosomal membrane. May play a role in mediating and regulating the internalization of the insulin receptor. This Danio rerio (Zebrafish) protein is Lysosomal cobalamin transport escort protein LMBD1 (lmbrd1).